A 642-amino-acid chain; its full sequence is Threonine--tRNA ligase (642 aa).

The TGS domain maps to 1–61; the sequence is MPVITLPDGS…ETDSTLSIIT (61 aa). A catalytic region spans residues 243–534; that stretch reads DHRKIGKQLD…LTEEFAGFFP (292 aa). Zn(2+) contacts are provided by Cys334, His385, and His511.

It belongs to the class-II aminoacyl-tRNA synthetase family. Homodimer. Zn(2+) is required as a cofactor.

It localises to the cytoplasm. It carries out the reaction tRNA(Thr) + L-threonine + ATP = L-threonyl-tRNA(Thr) + AMP + diphosphate + H(+). Its function is as follows. Catalyzes the attachment of threonine to tRNA(Thr) in a two-step reaction: L-threonine is first activated by ATP to form Thr-AMP and then transferred to the acceptor end of tRNA(Thr). Also edits incorrectly charged L-seryl-tRNA(Thr). This is Threonine--tRNA ligase from Klebsiella pneumoniae (strain 342).